We begin with the raw amino-acid sequence, 65 residues long: MPKMKSKSSAKKRFTVRAGGTIKRGQAFKRHILTKKTTKNKRHLRGSTEVAKADVKSIRSMLPYA.

Belongs to the bacterial ribosomal protein bL35 family.

The polypeptide is Large ribosomal subunit protein bL35 (Polynucleobacter asymbioticus (strain DSM 18221 / CIP 109841 / QLW-P1DMWA-1) (Polynucleobacter necessarius subsp. asymbioticus)).